The primary structure comprises 110 residues: MKFVLLFGVLLVTLFSYSSAEMLDDFDQADEDELLSLIEKEEARKDCIPKHYECTSNKHGCCRGHLFKYKCQCTTVVTQSGEETERCFCGTPPHHKAAELVVGFGKKIFG.

The first 20 residues, 1–20 (MKFVLLFGVLLVTLFSYSSA), serve as a signal peptide directing secretion. Positions 21–44 (EMLDDFDQADEDELLSLIEKEEAR) are excised as a propeptide. 4 disulfides stabilise this stretch: Cys-47–Cys-62, Cys-54–Cys-71, Cys-61–Cys-89, and Cys-73–Cys-87.

The protein belongs to the neurotoxin 19 (CSTX) family. 03 subfamily. As to expression, expressed by the venom gland.

It is found in the secreted. This chain is U1-lycotoxin-Ls1hh, found in Lycosa singoriensis (Wolf spider).